The sequence spans 416 residues: LysM domain-containing GPI-anchored protein 1 (416 aa).

Positions 1–27 (MKIPEKPIFLIFVSLILASSLTFTATA) are cleaved as a signal peptide. 4 cysteine pairs are disulfide-bonded: Cys34/Cys100, Cys40/Cys163, Cys98/Cys161, and Cys100/Cys163. Asn37 carries N-linked (GlcNAc...) asparagine glycosylation. The 48-residue stretch at 110–157 (THYKTRPSDNLGSIADSVYGGLVSAEQIQEANSVNDPSLLDVGTSLVI) folds into the LysM 1 domain. Residue Asn165 is glycosylated (N-linked (GlcNAc...) asparagine). The LysM 2 domain maps to 176 to 219 (LSYVVKEIDTLVGIARRYSTTITDLMNVNAMGAPDVSSGDILAV). 2 disulfide bridges follow: Cys224-Cys256 and Cys251-Cys279. An N-linked (GlcNAc...) asparagine glycan is attached at Asn241. 3 N-linked (GlcNAc...) asparagine glycosylation sites follow: Asn288, Asn299, and Asn310. A disordered region spans residues 356-376 (DGPGSIASSPRSSMLPGGGIL). Ala391 carries GPI-anchor amidated alanine lipidation. The propeptide at 392 to 416 (SASSVSYFFITFLISIASFSLALSS) is removed in mature form.

In terms of assembly, interacts with peptidoglycans.

The protein localises to the cell membrane. It is found in the secreted. Functionally, required as a cell surface receptor for peptidoglycan (PGN) elicitor signaling leading to innate immunity. Plays an essential role in detecting PGNs and restricting bacterial growth (of Pseudomonas syringae pv. tomato DC3000 for example). The protein is LysM domain-containing GPI-anchored protein 1 (LYM1) of Arabidopsis thaliana (Mouse-ear cress).